Here is a 312-residue protein sequence, read N- to C-terminus: Ribose-phosphate pyrophosphokinase (312 aa).

ATP contacts are provided by residues 34-36 and 93-94; these read DQE and RQ. 2 residues coordinate Mg(2+): H127 and D167. K191 is a catalytic residue. D-ribose 5-phosphate is bound by residues R193, D217, and 221-225; that span reads DSGGT.

The protein belongs to the ribose-phosphate pyrophosphokinase family. Class I subfamily. In terms of assembly, homohexamer. The cofactor is Mg(2+).

It localises to the cytoplasm. It carries out the reaction D-ribose 5-phosphate + ATP = 5-phospho-alpha-D-ribose 1-diphosphate + AMP + H(+). The protein operates within metabolic intermediate biosynthesis; 5-phospho-alpha-D-ribose 1-diphosphate biosynthesis; 5-phospho-alpha-D-ribose 1-diphosphate from D-ribose 5-phosphate (route I): step 1/1. Involved in the biosynthesis of the central metabolite phospho-alpha-D-ribosyl-1-pyrophosphate (PRPP) via the transfer of pyrophosphoryl group from ATP to 1-hydroxyl of ribose-5-phosphate (Rib-5-P). The protein is Ribose-phosphate pyrophosphokinase of Hyphomonas neptunium (strain ATCC 15444).